A 268-amino-acid polypeptide reads, in one-letter code: Enoyl-[acyl-carrier-protein] reductase [NADH] 2 (268 aa).

NAD(+) contacts are provided by residues G14, 20–21 (SI), Q41, 65–66 (DV), and I93. Catalysis depends on proton acceptor residues Y146 and Y156. NAD(+)-binding positions include K163 and 192–196 (IRTLA).

It belongs to the short-chain dehydrogenases/reductases (SDR) family. FabI subfamily.

Its subcellular location is the cell inner membrane. It catalyses the reaction a 2,3-saturated acyl-[ACP] + NAD(+) = a (2E)-enoyl-[ACP] + NADH + H(+). It participates in lipid metabolism; fatty acid biosynthesis. In Rhizobium meliloti (strain 1021) (Ensifer meliloti), this protein is Enoyl-[acyl-carrier-protein] reductase [NADH] 2 (fabI2).